We begin with the raw amino-acid sequence, 116 residues long: Putative pterin-4-alpha-carbinolamine dehydratase (116 aa).

The protein belongs to the pterin-4-alpha-carbinolamine dehydratase family.

The catalysed reaction is (4aS,6R)-4a-hydroxy-L-erythro-5,6,7,8-tetrahydrobiopterin = (6R)-L-erythro-6,7-dihydrobiopterin + H2O. The sequence is that of Putative pterin-4-alpha-carbinolamine dehydratase from Xylella fastidiosa (strain 9a5c).